Reading from the N-terminus, the 492-residue chain is Catalase-2 (492 aa).

Active-site residues include His65 and Asn138. Position 348 (Tyr348) interacts with heme.

This sequence belongs to the catalase family. As to quaternary structure, homotetramer and heterotetramer. At least six or seven isozymes are produced from a mixture of 3 gene products. Interacts with NCA1. Interacts with LSD1. Heme is required as a cofactor.

Its subcellular location is the cytoplasm. It is found in the cytosol. The protein localises to the peroxisome matrix. The enzyme catalyses 2 H2O2 = O2 + 2 H2O. Functionally, catalyzes the degradation of hydrogen peroxide (H(2)O(2)) generated by peroxisomal oxidases to water and oxygen, thereby protecting cells from the toxic effects of hydrogen peroxide. The sequence is that of Catalase-2 (CAT2) from Arabidopsis thaliana (Mouse-ear cress).